Consider the following 456-residue polypeptide: ATP-dependent protease ATPase subunit HslU (456 aa).

ATP is bound by residues I18, 60 to 65, D270, E334, and R406; that span reads GVGKTE.

Belongs to the ClpX chaperone family. HslU subfamily. In terms of assembly, a double ring-shaped homohexamer of HslV is capped on each side by a ring-shaped HslU homohexamer. The assembly of the HslU/HslV complex is dependent on binding of ATP.

The protein localises to the cytoplasm. ATPase subunit of a proteasome-like degradation complex; this subunit has chaperone activity. The binding of ATP and its subsequent hydrolysis by HslU are essential for unfolding of protein substrates subsequently hydrolyzed by HslV. HslU recognizes the N-terminal part of its protein substrates and unfolds these before they are guided to HslV for hydrolysis. This chain is ATP-dependent protease ATPase subunit HslU, found in Exiguobacterium sibiricum (strain DSM 17290 / CCUG 55495 / CIP 109462 / JCM 13490 / 255-15).